Reading from the N-terminus, the 291-residue chain is ATP synthase gamma chain (291 aa).

The protein belongs to the ATPase gamma chain family. As to quaternary structure, F-type ATPases have 2 components, CF(1) - the catalytic core - and CF(0) - the membrane proton channel. CF(1) has five subunits: alpha(3), beta(3), gamma(1), delta(1), epsilon(1). CF(0) has three main subunits: a, b and c.

Its subcellular location is the cell inner membrane. Functionally, produces ATP from ADP in the presence of a proton gradient across the membrane. The gamma chain is believed to be important in regulating ATPase activity and the flow of protons through the CF(0) complex. In Chlorobium phaeobacteroides (strain DSM 266 / SMG 266 / 2430), this protein is ATP synthase gamma chain.